A 343-amino-acid polypeptide reads, in one-letter code: MSLNWRKQKILKTIISDYIKRAEPVGSRTLTKRYEFDLSPATIRNEMADLEDMGFLEQPHTSAGRIPTERGYRFFVDELITRCLSVPQQELLLKKLTKFKALEINEIVQVTARALAEMTDYTSLVLGPQTSKSAFQEIQVFPIDQQRVLMVLTTDTGIIESKPVPVSGNLSKQELSNIVQHLNKRLKGLTIDDITPSLLKELRTDLIKEVDLVEKAMHILADSFRHSSANVALGGTKNILNQPEFNDLKKVKELLSFFENEEVLAELLSESEGIVVRIGKENPRDEVKDCSLVTASYELNGRPLGTIGVLGPTRMDYSRVIAIVAQIANELTMALDKKKITEE.

It belongs to the HrcA family.

In terms of biological role, negative regulator of class I heat shock genes (grpE-dnaK-dnaJ and groELS operons). Prevents heat-shock induction of these operons. This Natranaerobius thermophilus (strain ATCC BAA-1301 / DSM 18059 / JW/NM-WN-LF) protein is Heat-inducible transcription repressor HrcA.